The following is a 427-amino-acid chain: Thyroid hormone receptor alpha-A (427 aa).

The segment covering 1 to 11 has biased composition (basic and acidic residues); the sequence is MENTEQEHNLP. Residues 1–40 form a disordered region; sequence MENTEQEHNLPEGDETQWPNGVKRKRKNSQCSMNSTSDKS. The interval 1–56 is modulating; it reads MENTEQEHNLPEGDETQWPNGVKRKRKNSQCSMNSTSDKSISVPGYVPSYLEKDEP. Polar residues predominate over residues 29 to 40; that stretch reads SQCSMNSTSDKS. NR C4-type zinc fingers lie at residues 57 to 77 and 95 to 119; these read CVVC…CEGC and CKYD…FRKC. Positions 57–131 form a DNA-binding region, nuclear receptor; it reads CVVCGDKATG…VGMAMDLVLD (75 aa). The NR LBD domain occupies 167 to 410; that stretch reads SEWELIRMVT…PPLFLEVFED (244 aa).

This sequence belongs to the nuclear hormone receptor family. NR1 subfamily. In terms of assembly, interacts with ncoa2. In terms of tissue distribution, after the mid-blastula transition (MBT), expressed throughout the deep cells, which give rise to the embryo proper. In adults, isoform 2 shows highest expression in the eye and liver. Expressed in adult gonads.

Its subcellular location is the nucleus. High affinity receptor for triiodothyronine. In the absence of thyroid hormone during late blastula stage development, acts as a transcriptional repressor. Whereas in the presence of thyroid hormone, can act as an activator of transcription. In addition, represses retinoic acid (RA)-signaling during blastula and gastrula stages of development. The chain is Thyroid hormone receptor alpha-A (thraa) from Danio rerio (Zebrafish).